Here is a 231-residue protein sequence, read N- to C-terminus: Axial regulator YABBY 4 (231 aa).

The segment at 26 to 53 adopts a C4-type zinc-finger fold; that stretch reads CGFCTTILLVSVPFTSLSMVVTVRCGHC. Disordered regions lie at residues 98 to 120 and 211 to 231; these read KVNQ…EDED and NNGF…SPFE.

Belongs to the YABBY family. Interacts with SPL/NZZ.

The protein localises to the nucleus. Its function is as follows. Essential for the formation and the abaxial-adaxial asymmetric growth of the ovule outer integument. The polypeptide is Axial regulator YABBY 4 (YAB4) (Arabidopsis thaliana (Mouse-ear cress)).